We begin with the raw amino-acid sequence, 861 residues long: Semaphorin-4D (861 aa).

An N-terminal signal peptide occupies residues 1–23 (MRMCAPVRGLFLALVVVLRTAVA). The Sema domain maps to 24 to 500 (FAPVPRLTWE…SNSGVVQAPL (477 aa)). The Extracellular portion of the chain corresponds to 24–733 (FAPVPRLTWE…TVYLKSSDNR (710 aa)). Asparagine 49 and asparagine 77 each carry an N-linked (GlcNAc...) asparagine glycan. 2 disulfide bridges follow: cysteine 97-cysteine 108 and cysteine 126-cysteine 135. Asparagine 139 and asparagine 191 each carry an N-linked (GlcNAc...) asparagine glycan. Cystine bridges form between cysteine 257-cysteine 370 and cysteine 281-cysteine 326. N-linked (GlcNAc...) asparagine glycosylation is found at asparagine 379 and asparagine 419. A PSI domain is found at 502-551 (FCEKHGSCEDCVLARDPYCAWSPAIKACVTLHQEEASSRGWIQDMSGDTS). Disulfide bonds link cysteine 503–cysteine 520, cysteine 509–cysteine 553, cysteine 512–cysteine 529, and cysteine 576–cysteine 624. The Ig-like C2-type domain maps to 555–636 (DKSKESFNQH…EERVRNKTVS (82 aa)). Asparagine 613 and asparagine 632 each carry an N-linked (GlcNAc...) asparagine glycan. Residues 649 to 709 (VPRTPPSPTS…KSSSGTSCEP (61 aa)) form a disordered region. Polar residues predominate over residues 657-681 (TSEDAQTEGSKITSKMPVASTQGSS). The helical transmembrane segment at 734–754 (LLMSLLLFIFVLFLCLFSYNC) threads the bilayer. Over 755-861 (YKGYLPGQCL…KFADSDADGD (107 aa)) the chain is Cytoplasmic. Residues serine 782 and serine 832 each carry the phosphoserine modification. The interval 793-839 (VEPGSFSQQNGDHPKPALDTGYETEQDTITSKVPTDREDSQRIDELS) is disordered. Residues 826–839 (PTDREDSQRIDELS) show a composition bias toward basic and acidic residues.

It belongs to the semaphorin family. In terms of assembly, homodimer. Interacts with PLXNB1. Interacts with PLXNB2. Strongly expressed in lymphoid tissues, especially in the thymus, as well as in the nervous tissues. Expressed in neurons and glia in the developing hippocampus.

The protein localises to the cell membrane. In terms of biological role, cell surface receptor for PLXNB1 and PLXNB2 that plays an important role in cell-cell signaling. Regulates GABAergic synapse development. Promotes the development of inhibitory synapses in a PLXNB1-dependent manner. Modulates the complexity and arborization of developing neurites in hippocampal neurons by activating PLXNB1 and interaction with PLXNB1 mediates activation of RHOA. Promotes the migration of cerebellar granule cells. Plays a role in the immune system; induces B-cells to aggregate and improves their viability (in vitro). Induces endothelial cell migration through the activation of PTK2B/PYK2, SRC, and the phosphatidylinositol 3-kinase-AKT pathway. The polypeptide is Semaphorin-4D (Sema4d) (Mus musculus (Mouse)).